Reading from the N-terminus, the 134-residue chain is Holo-[acyl-carrier-protein] synthase (134 aa).

Residues D8 and E57 each coordinate Mg(2+).

Belongs to the P-Pant transferase superfamily. AcpS family. The cofactor is Mg(2+).

The protein resides in the cytoplasm. The catalysed reaction is apo-[ACP] + CoA = holo-[ACP] + adenosine 3',5'-bisphosphate + H(+). Functionally, transfers the 4'-phosphopantetheine moiety from coenzyme A to a Ser of acyl-carrier-protein. This Roseobacter denitrificans (strain ATCC 33942 / OCh 114) (Erythrobacter sp. (strain OCh 114)) protein is Holo-[acyl-carrier-protein] synthase.